We begin with the raw amino-acid sequence, 500 residues long: Histidine ammonia-lyase (500 aa).

The segment at residues 142–144 is a cross-link (5-imidazolinone (Ala-Gly)); sequence ASG. At serine 143 the chain carries 2,3-didehydroalanine (Ser).

Belongs to the PAL/histidase family. In terms of processing, contains an active site 4-methylidene-imidazol-5-one (MIO), which is formed autocatalytically by cyclization and dehydration of residues Ala-Ser-Gly.

The protein localises to the cytoplasm. The catalysed reaction is L-histidine = trans-urocanate + NH4(+). It functions in the pathway amino-acid degradation; L-histidine degradation into L-glutamate; N-formimidoyl-L-glutamate from L-histidine: step 1/3. This Macrococcus caseolyticus (strain JCSC5402) (Macrococcoides caseolyticum) protein is Histidine ammonia-lyase.